A 349-amino-acid polypeptide reads, in one-letter code: 4-hydroxythreonine-4-phosphate dehydrogenase (349 aa).

His-141 and Thr-142 together coordinate substrate. Residues His-176, His-221, and His-276 each coordinate a divalent metal cation. Lys-284, Asn-293, and Arg-302 together coordinate substrate.

Belongs to the PdxA family. Homodimer. The cofactor is Zn(2+). Mg(2+) serves as cofactor. Requires Co(2+) as cofactor.

The protein localises to the cytoplasm. It catalyses the reaction 4-(phosphooxy)-L-threonine + NAD(+) = 3-amino-2-oxopropyl phosphate + CO2 + NADH. The protein operates within cofactor biosynthesis; pyridoxine 5'-phosphate biosynthesis; pyridoxine 5'-phosphate from D-erythrose 4-phosphate: step 4/5. Functionally, catalyzes the NAD(P)-dependent oxidation of 4-(phosphooxy)-L-threonine (HTP) into 2-amino-3-oxo-4-(phosphooxy)butyric acid which spontaneously decarboxylates to form 3-amino-2-oxopropyl phosphate (AHAP). This is 4-hydroxythreonine-4-phosphate dehydrogenase from Methylorubrum extorquens (strain CM4 / NCIMB 13688) (Methylobacterium extorquens).